The sequence spans 234 residues: Protein rgg8 (234 aa).

Its subcellular location is the cytoplasm. It localises to the nucleus. The protein is Protein rgg8 (rgg8) of Schizosaccharomyces pombe (strain 972 / ATCC 24843) (Fission yeast).